A 631-amino-acid polypeptide reads, in one-letter code: 1-deoxy-D-xylulose-5-phosphate synthase (631 aa).

Thiamine diphosphate-binding positions include His-73 and 114-116 (SHA). Mg(2+) is bound at residue Asp-145. Residues 146–147 (GA), Asn-175, Tyr-286, and Glu-368 each bind thiamine diphosphate. Position 175 (Asn-175) interacts with Mg(2+).

The protein belongs to the transketolase family. DXPS subfamily. As to quaternary structure, homodimer. Mg(2+) serves as cofactor. Requires thiamine diphosphate as cofactor.

It catalyses the reaction D-glyceraldehyde 3-phosphate + pyruvate + H(+) = 1-deoxy-D-xylulose 5-phosphate + CO2. It participates in metabolic intermediate biosynthesis; 1-deoxy-D-xylulose 5-phosphate biosynthesis; 1-deoxy-D-xylulose 5-phosphate from D-glyceraldehyde 3-phosphate and pyruvate: step 1/1. In terms of biological role, catalyzes the acyloin condensation reaction between C atoms 2 and 3 of pyruvate and glyceraldehyde 3-phosphate to yield 1-deoxy-D-xylulose-5-phosphate (DXP). The sequence is that of 1-deoxy-D-xylulose-5-phosphate synthase from Nocardia farcinica (strain IFM 10152).